A 233-amino-acid chain; its full sequence is 5'-methylthioadenosine/S-adenosylhomocysteine nucleosidase (233 aa).

The Proton acceptor role is filled by glutamate 12. Substrate contacts are provided by residues glycine 78, isoleucine 152, and methionine 173–glutamate 174. Aspartate 197 functions as the Proton donor in the catalytic mechanism.

The protein belongs to the PNP/UDP phosphorylase family. MtnN subfamily. In terms of assembly, homodimer.

The catalysed reaction is S-adenosyl-L-homocysteine + H2O = S-(5-deoxy-D-ribos-5-yl)-L-homocysteine + adenine. It carries out the reaction S-methyl-5'-thioadenosine + H2O = 5-(methylsulfanyl)-D-ribose + adenine. It catalyses the reaction 5'-deoxyadenosine + H2O = 5-deoxy-D-ribose + adenine. It functions in the pathway amino-acid biosynthesis; L-methionine biosynthesis via salvage pathway; S-methyl-5-thio-alpha-D-ribose 1-phosphate from S-methyl-5'-thioadenosine (hydrolase route): step 1/2. Its function is as follows. Catalyzes the irreversible cleavage of the glycosidic bond in both 5'-methylthioadenosine (MTA) and S-adenosylhomocysteine (SAH/AdoHcy) to adenine and the corresponding thioribose, 5'-methylthioribose and S-ribosylhomocysteine, respectively. Also cleaves 5'-deoxyadenosine, a toxic by-product of radical S-adenosylmethionine (SAM) enzymes, into 5-deoxyribose and adenine. Thus, is required for in vivo function of the radical SAM enzymes biotin synthase and lipoic acid synthase, that are inhibited by 5'-deoxyadenosine accumulation. This is 5'-methylthioadenosine/S-adenosylhomocysteine nucleosidase from Yersinia pseudotuberculosis serotype O:1b (strain IP 31758).